Here is a 648-residue protein sequence, read N- to C-terminus: MHLSDITHPNQLRNLNLSQLRSLARQIRDKHLQTAANSPVGCHLGPGLGVVELTLALYKTLDLDRDKVIWDVGHQAYAHKMLTGRYHNFHTLRQKGGISGYLKRSESRFDHFGAGHASTSISAALGMAIARDRRGDNFKVVAIIGDGALTGGMAYEAINHAGHLPKTNLMVVLNDNGMSISPNVGAIPRYLNRLRLSPPVQFLADSLEEQLKNLPLLGSSLSPEIDRLKETVKLVTAVQNNKAGIIFEELGFTYVGPVDGHNLAELLDAFELAHGISGPVLVHVATVKGKGYPPAEAEQVGYHAQSRFDLATGKPYPPTKPKPPSYSKVFGHALCKLAERDPRIIGITAAMDTGTGLDKLKEKLPDQFVDVGIAEQHAVTLAAGMACEGMRPVVAIYSTFLQRAYDQIIHDVCIQKLPVFFCLDRAGVVGADGPTHQGMYDIAYLRCIPEMVLMAPKDEAELQRMVVTGIQYTQGPIAMRYPRGSGVGVPLAEEGWEPLPIGKAEVLRSGGEVLILAYGSMVHPSLQAAEILKEHGISATVVNARFAKPLDTELILPLAEQSRLVVTVEEGCLMGGFGSAVAEALLDADLAVPLLRLGVPDVWVEHATPEESLAELGLNSAGIAERIRAKFQARVLKGSPAELPTVNS.

Thiamine diphosphate contacts are provided by residues His74 and Gly115–Ala117. Asp146 is a binding site for Mg(2+). Thiamine diphosphate-binding positions include Gly147–Ala148, Asn176, Tyr292, and Glu375. Asn176 serves as a coordination point for Mg(2+).

It belongs to the transketolase family. DXPS subfamily. As to quaternary structure, homodimer. Mg(2+) serves as cofactor. Requires thiamine diphosphate as cofactor.

The enzyme catalyses D-glyceraldehyde 3-phosphate + pyruvate + H(+) = 1-deoxy-D-xylulose 5-phosphate + CO2. It participates in metabolic intermediate biosynthesis; 1-deoxy-D-xylulose 5-phosphate biosynthesis; 1-deoxy-D-xylulose 5-phosphate from D-glyceraldehyde 3-phosphate and pyruvate: step 1/1. In terms of biological role, catalyzes the acyloin condensation reaction between C atoms 2 and 3 of pyruvate and glyceraldehyde 3-phosphate to yield 1-deoxy-D-xylulose-5-phosphate (DXP). The protein is 1-deoxy-D-xylulose-5-phosphate synthase of Synechococcus sp. (strain JA-2-3B'a(2-13)) (Cyanobacteria bacterium Yellowstone B-Prime).